Consider the following 329-residue polypeptide: Alternative oxidase, mitochondrial (329 aa).

A helical transmembrane segment spans residues 115–135 (VISRCLFLETVAGVPGMVGGM). Positions 123, 162, and 165 each coordinate Fe cation. Residues 181–201 (VSIIITQAIMYLFLLVAYVIS) form a helical membrane-spanning segment. Fe cation-binding residues include Glu213, Glu266, and His269. The tract at residues 300–329 (EMYSNQPSGKTRTDFGSEGAKTASNVNKHV) is disordered.

This sequence belongs to the alternative oxidase family. As to quaternary structure, homodimer; disulfide-linked. Fe cation is required as a cofactor.

The protein localises to the mitochondrion inner membrane. Catalyzes cyanide-resistant oxygen consumption. May increase respiration when the cytochrome respiratory pathway is restricted, or in response to low temperatures. This Trypanosoma brucei brucei protein is Alternative oxidase, mitochondrial (AOX).